The chain runs to 672 residues: Beta-galactosidase bgaB (672 aa).

Arg109 is a binding site for substrate. Cys113 is a binding site for Zn(2+). Substrate is bound at residue Asn147. Glu148 serves as the catalytic Proton donor. Zn(2+) contacts are provided by Cys156, Cys158, and Cys161. The active-site Nucleophile is Glu303. Substrate-binding positions include Trp311 and 351-354 (EKFH).

It belongs to the glycosyl hydrolase 42 family.

The enzyme catalyses Hydrolysis of terminal non-reducing beta-D-galactose residues in beta-D-galactosides.. Its activity is regulated as follows. By divalent metal ions. Fe(2+), Zn(2+), Cu(2+), Pb(2+) and Sn(2+) inhibit 52, 76.6, 85.3, 100 and 100% of the enzyme activity, respectively. Other metal cations and EDTA do not inhibit this enzyme. Thiol reagents 2-mercaptoethanol and dithiothreitol have no effect on the activity. Sulfhydryl group-blocking reagents p-chloromercuribenzoic acid and iodoacetic acid inhibit 86.2 and 74% of the enzyme activity, respectively. Hydrolyzes 6-bromo-2-naphthyl-beta-D-galactopyranoside and o-nitrophenyl-beta-D-galactopyranoside (ONPG). Possesses a high level of transgalactosylation activity. Hydrolyzes lactose in milk. The polypeptide is Beta-galactosidase bgaB (bgaB) (Geobacillus kaustophilus).